The primary structure comprises 79 residues: Cyclin-dependent kinases regulatory subunit 2 (79 aa).

This sequence belongs to the CKS family. As to quaternary structure, forms a homohexamer that can probably bind six kinase subunits.

Its function is as follows. Binds to the catalytic subunit of the cyclin dependent kinases and is essential for their biological function. The polypeptide is Cyclin-dependent kinases regulatory subunit 2 (cks2) (Xenopus laevis (African clawed frog)).